A 275-amino-acid chain; its full sequence is MTLQQQIIKALGAKPQINAEEEIRRSIDFLKSYLQTYPFIKSLVLGISGGQDSTLAGKLCQMAINELRLETGNESLQFIAVRMPYGVQADEQDCQDAIAFIQPDRVLTVNIKGAVLASEQALREAGIELSDFVRGNEKARERMKAQYSIAGMTSGVVVGTDHAAEAITGFFTKYGDGGTDINPLYRLNKRQGKQLLTALGCPEHLYKKAPTADLEDDRPSLPDEVALGVTYDNIDDYLEGKNVPEQVARTIENWYLKTEHKRRPPITVFDDFWKK.

Position 46-53 (46-53 (GISGGQDS)) interacts with ATP. Mg(2+) is bound at residue aspartate 52. Arginine 140 is a binding site for deamido-NAD(+). Threonine 160 lines the ATP pocket. Glutamate 165 contacts Mg(2+). Deamido-NAD(+) contacts are provided by lysine 173 and aspartate 180. Positions 189 and 211 each coordinate ATP. 260 to 261 (HK) contacts deamido-NAD(+).

Belongs to the NAD synthetase family. As to quaternary structure, homodimer.

The catalysed reaction is deamido-NAD(+) + NH4(+) + ATP = AMP + diphosphate + NAD(+) + H(+). Its pathway is cofactor biosynthesis; NAD(+) biosynthesis; NAD(+) from deamido-NAD(+) (ammonia route): step 1/1. Functionally, catalyzes the ATP-dependent amidation of deamido-NAD to form NAD. Uses ammonia as a nitrogen source. This is NH(3)-dependent NAD(+) synthetase from Escherichia coli O8 (strain IAI1).